Here is a 284-residue protein sequence, read N- to C-terminus: Homeobox protein SMOX-5 (284 aa).

The homeobox DNA-binding region spans 37–96 (RRKTRTTFSNCQLNELENNFNRQRYLTPTDRDRIAKHLGLTNTQVITWFQNRRAKLKREA). Residues 117-172 (LSLSDHDHEETQIDDENEQGDNNNDDDGDDNDVEEDDGEEQEKNHTKYLTQPPSIS) are disordered. The span at 128–156 (QIDDENEQGDNNNDDDGDDNDVEEDDGEE) shows a compositional bias: acidic residues.

It localises to the nucleus. The sequence is that of Homeobox protein SMOX-5 (SMOX-5) from Schistosoma mansoni (Blood fluke).